A 213-amino-acid chain; its full sequence is FMN-dependent NADH:quinone oxidoreductase 3 (213 aa).

FMN-binding positions include serine 10, 16-18, and 96-99; these read SVS and MYNF.

It belongs to the azoreductase type 1 family. Homodimer. Requires FMN as cofactor.

It catalyses the reaction 2 a quinone + NADH + H(+) = 2 a 1,4-benzosemiquinone + NAD(+). It carries out the reaction N,N-dimethyl-1,4-phenylenediamine + anthranilate + 2 NAD(+) = 2-(4-dimethylaminophenyl)diazenylbenzoate + 2 NADH + 2 H(+). Quinone reductase that provides resistance to thiol-specific stress caused by electrophilic quinones. Shows a preference for naphthoquinones such as plumbagin. Functionally, also exhibits azoreductase activity. Catalyzes the reductive cleavage of the azo bond in aromatic azo compounds to the corresponding amines. Preferred substrates are methyl red, amaranth and p-aminoazobenzene sulfonamide (PAABSA). This chain is FMN-dependent NADH:quinone oxidoreductase 3, found in Pseudomonas aeruginosa (strain ATCC 15692 / DSM 22644 / CIP 104116 / JCM 14847 / LMG 12228 / 1C / PRS 101 / PAO1).